A 358-amino-acid chain; its full sequence is UDP-N-acetylglucosamine--N-acetylmuramyl-(pentapeptide) pyrophosphoryl-undecaprenol N-acetylglucosamine transferase (358 aa).

UDP-N-acetyl-alpha-D-glucosamine-binding positions include 11–13 (TGG), Asn122, Arg161, Ser189, Ile243, 262–267 (ALTVCE), and Gln288.

The protein belongs to the glycosyltransferase 28 family. MurG subfamily.

It localises to the cell inner membrane. The enzyme catalyses di-trans,octa-cis-undecaprenyl diphospho-N-acetyl-alpha-D-muramoyl-L-alanyl-D-glutamyl-meso-2,6-diaminopimeloyl-D-alanyl-D-alanine + UDP-N-acetyl-alpha-D-glucosamine = di-trans,octa-cis-undecaprenyl diphospho-[N-acetyl-alpha-D-glucosaminyl-(1-&gt;4)]-N-acetyl-alpha-D-muramoyl-L-alanyl-D-glutamyl-meso-2,6-diaminopimeloyl-D-alanyl-D-alanine + UDP + H(+). Its pathway is cell wall biogenesis; peptidoglycan biosynthesis. Cell wall formation. Catalyzes the transfer of a GlcNAc subunit on undecaprenyl-pyrophosphoryl-MurNAc-pentapeptide (lipid intermediate I) to form undecaprenyl-pyrophosphoryl-MurNAc-(pentapeptide)GlcNAc (lipid intermediate II). The polypeptide is UDP-N-acetylglucosamine--N-acetylmuramyl-(pentapeptide) pyrophosphoryl-undecaprenol N-acetylglucosamine transferase (Coxiella burnetii (strain CbuK_Q154) (Coxiella burnetii (strain Q154))).